The following is a 290-amino-acid chain: uncharacterized protein (290 aa).

This is an uncharacterized protein from Escherichia phage lambda (Bacteriophage lambda).